Reading from the N-terminus, the 426-residue chain is Enolase (426 aa).

A (2R)-2-phosphoglycerate-binding site is contributed by glutamine 163. Glutamate 205 (proton donor) is an active-site residue. Mg(2+) contacts are provided by aspartate 242, glutamate 286, and aspartate 313. (2R)-2-phosphoglycerate contacts are provided by lysine 338, arginine 367, serine 368, and lysine 389. Lysine 338 functions as the Proton acceptor in the catalytic mechanism.

This sequence belongs to the enolase family. Requires Mg(2+) as cofactor.

The protein resides in the cytoplasm. Its subcellular location is the secreted. It is found in the cell surface. It catalyses the reaction (2R)-2-phosphoglycerate = phosphoenolpyruvate + H2O. Its pathway is carbohydrate degradation; glycolysis; pyruvate from D-glyceraldehyde 3-phosphate: step 4/5. In terms of biological role, catalyzes the reversible conversion of 2-phosphoglycerate (2-PG) into phosphoenolpyruvate (PEP). It is essential for the degradation of carbohydrates via glycolysis. In Helicobacter pylori (strain G27), this protein is Enolase.